Reading from the N-terminus, the 445-residue chain is Phosphoglucosamine mutase (445 aa).

The active-site Phosphoserine intermediate is the Ser101. Ser101, Asp240, Asp242, and Asp244 together coordinate Mg(2+). Ser101 carries the phosphoserine modification.

The protein belongs to the phosphohexose mutase family. Requires Mg(2+) as cofactor. In terms of processing, activated by phosphorylation.

It catalyses the reaction alpha-D-glucosamine 1-phosphate = D-glucosamine 6-phosphate. Its function is as follows. Catalyzes the conversion of glucosamine-6-phosphate to glucosamine-1-phosphate. This Pseudomonas aeruginosa (strain LESB58) protein is Phosphoglucosamine mutase.